A 1107-amino-acid chain; its full sequence is Rho GTPase-activating protein 45 (1107 aa).

Residues 1–99 (MFSRKKRELM…SPPESGEGPF (99 aa)) are disordered. The segment covering 37 to 55 (DSSNDLASSPPSNSSPVSS) has biased composition (low complexity). Over residues 56–66 (GTLKRPSSLSR) the composition is skewed to polar residues. Coiled-coil stretches lie at residues 103-132 (EDISQLLGDVARFAERLEKLRDVVQDEELK) and 363-485 (NMRR…QSDQ). Residues 261 to 524 (EDVDVILQRS…SSKLYDLGQQ (264 aa)) enclose the F-BAR domain. Basic and acidic residues-rich tracts occupy residues 414-423 (NATRAEEEQS), 434-444 (RRAEEEAKNRA), and 573-588 (ENKEISGEERGVERRG). Disordered regions lie at residues 414–444 (NATRAEEEQSHSGTRSLDKKRRAEEEAKNRA) and 564–595 (FNSQDIPSSENKEISGEERGVERRGGRGHQVH). The Phorbol-ester/DAG-type zinc finger occupies 671–716 (THRLRKLRTPSKCRECNSYVYFQGAECEECSLACHKKCLETLAIQC). Residues 730-942 (RDFSETALRS…TLIIFYSTIF (213 aa)) enclose the Rho-GAP domain. Positions 981 to 1036 (LTPEYQIPVFKEPGASTVESDSESDGAEDIPGTWKPQTTRGHLTKEASVTSAEDIP) are disordered. The span at 1015-1031 (KPQTTRGHLTKEASVTS) shows a compositional bias: polar residues.

It is found in the cytoplasm. Its subcellular location is the cell projection. The protein resides in the ruffle membrane. Functionally, contains a GTPase activator for the Rho-type GTPases (RhoGAP) domain that would be able to negatively regulate the actin cytoskeleton as well as cell spreading. However, also contains N-terminally a BAR-domin which is able to play an autoinhibitory effect on this RhoGAP activity. This Xenopus laevis (African clawed frog) protein is Rho GTPase-activating protein 45.